A 113-amino-acid polypeptide reads, in one-letter code: Hydrogenase maturation factor HypA 2 (113 aa).

H2 serves as a coordination point for Ni(2+). Zn(2+) is bound by residues C73, C76, C89, and C92.

This sequence belongs to the HypA/HybF family.

Its function is as follows. Involved in the maturation of [NiFe] hydrogenases. Required for nickel insertion into the metal center of the hydrogenase. The polypeptide is Hydrogenase maturation factor HypA 2 (Bradyrhizobium diazoefficiens (strain JCM 10833 / BCRC 13528 / IAM 13628 / NBRC 14792 / USDA 110)).